We begin with the raw amino-acid sequence, 150 residues long: Macrodomain Ter protein (150 aa).

The protein belongs to the MatP family. As to quaternary structure, homodimer.

The protein resides in the cytoplasm. Functionally, required for spatial organization of the terminus region of the chromosome (Ter macrodomain) during the cell cycle. Prevents early segregation of duplicated Ter macrodomains during cell division. Binds specifically to matS, which is a 13 bp signature motif repeated within the Ter macrodomain. This is Macrodomain Ter protein from Erwinia tasmaniensis (strain DSM 17950 / CFBP 7177 / CIP 109463 / NCPPB 4357 / Et1/99).